The following is a 319-amino-acid chain: GTP 3',8-cyclase (319 aa).

In terms of domain architecture, Radical SAM core spans 4–227 (KHGRKINYLR…VETDKSSTAL (224 aa)). Residue Arg-13 coordinates GTP. Positions 20 and 24 each coordinate [4Fe-4S] cluster. Position 26 (Tyr-26) interacts with S-adenosyl-L-methionine. Cys-27 provides a ligand contact to [4Fe-4S] cluster. Arg-63 provides a ligand contact to GTP. Position 67 (Gly-67) interacts with S-adenosyl-L-methionine. Thr-94 is a binding site for GTP. Ser-118 serves as a coordination point for S-adenosyl-L-methionine. Lys-155 provides a ligand contact to GTP. Met-189 provides a ligand contact to S-adenosyl-L-methionine. Residues Cys-249 and Cys-252 each contribute to the [4Fe-4S] cluster site. 254–256 (RVR) lines the GTP pocket. Cys-266 serves as a coordination point for [4Fe-4S] cluster.

The protein belongs to the radical SAM superfamily. MoaA family. In terms of assembly, monomer and homodimer. [4Fe-4S] cluster serves as cofactor.

It catalyses the reaction GTP + AH2 + S-adenosyl-L-methionine = (8S)-3',8-cyclo-7,8-dihydroguanosine 5'-triphosphate + 5'-deoxyadenosine + L-methionine + A + H(+). It functions in the pathway cofactor biosynthesis; molybdopterin biosynthesis. Its function is as follows. Catalyzes the cyclization of GTP to (8S)-3',8-cyclo-7,8-dihydroguanosine 5'-triphosphate. The polypeptide is GTP 3',8-cyclase (Clostridium botulinum (strain Langeland / NCTC 10281 / Type F)).